Consider the following 115-residue polypeptide: Large ribosomal subunit protein bL20 (115 aa).

The protein belongs to the bacterial ribosomal protein bL20 family.

In terms of biological role, binds directly to 23S ribosomal RNA and is necessary for the in vitro assembly process of the 50S ribosomal subunit. It is not involved in the protein synthesizing functions of that subunit. This Prochlorococcus marinus (strain MIT 9303) protein is Large ribosomal subunit protein bL20.